The sequence spans 708 residues: Glycine--tRNA ligase beta subunit (708 aa).

The protein belongs to the class-II aminoacyl-tRNA synthetase family. Tetramer of two alpha and two beta subunits.

It is found in the cytoplasm. The catalysed reaction is tRNA(Gly) + glycine + ATP = glycyl-tRNA(Gly) + AMP + diphosphate. The sequence is that of Glycine--tRNA ligase beta subunit from Methylobacillus flagellatus (strain ATCC 51484 / DSM 6875 / VKM B-1610 / KT).